Consider the following 89-residue polypeptide: Small ribosomal subunit protein bS20 (89 aa).

Over residues 1 to 11 (MANIKSQIKRN) the composition is skewed to polar residues. Residues 1 to 22 (MANIKSQIKRNLTNEKRRLRNK) form a disordered region.

This sequence belongs to the bacterial ribosomal protein bS20 family.

Its function is as follows. Binds directly to 16S ribosomal RNA. This Frankia casuarinae (strain DSM 45818 / CECT 9043 / HFP020203 / CcI3) protein is Small ribosomal subunit protein bS20.